The primary structure comprises 202 residues: Putative zinc finger protein ZK686.5 (202 aa).

A disordered region spans residues 43–63 (RKNVDNTSTRKPYSYKDRKRK). 3 C2H2-type zinc fingers span residues 110–133 (TYCE…GKVH), 138–160 (IECH…MKTH), and 169–192 (VQCE…DVSH).

Its subcellular location is the nucleus. This chain is Putative zinc finger protein ZK686.5, found in Caenorhabditis elegans.